Consider the following 66-residue polypeptide: Ejaculatory bulb-specific protein 2 (66 aa).

An N-terminal signal peptide occupies residues 1 to 20; sequence MIRILVLMITFTLMTGSALC.

Specifically expressed in the ejaculatory bulb and seminal fluid.

The protein resides in the secreted. Protein component of the posterior mating plug. The polypeptide is Ejaculatory bulb-specific protein 2 (Drosophila melanogaster (Fruit fly)).